The following is a 64-amino-acid chain: Phylloxin-B1 (64 aa).

The N-terminal stretch at 1-22 (MVFLKKSLLLVLFVGLVSLSIC) is a signal peptide. A propeptide spanning residues 23-42 (EENKREEHEEIEENKEKAEE) is cleaved from the precursor. Glutamine 63 carries the post-translational modification Glutamine amide.

As to expression, expressed by the skin glands.

The protein localises to the secreted. Antimicrobial peptide against the wall-less bacteria A.laidlawii and S.melliferum, the Gram-positive bacteria B.megaterium KM, C.glutamicum ATCC 27853 and M.luteus ATCC 27853 and the Gram-negative-bacteria R.meliloti 102F34 and E.coli K12. The chain is Phylloxin-B1 from Phyllomedusa bicolor (Two-colored leaf frog).